A 534-amino-acid polypeptide reads, in one-letter code: Probable protein kinase UbiB (534 aa).

Residues 23-43 (DLLFDLPLPWFLLALRFALPW) traverse the membrane as a helical segment. Positions 125–492 (RFDIEPLASA…WHKRKDDWFL (368 aa)) constitute a Protein kinase domain. ATP is bound by residues 131–139 (LASASVAQV) and lysine 153. The active-site Proton acceptor is aspartate 288. 2 helical membrane-spanning segments follow: residues 490–510 (WFLR…AAGG) and 512–532 (LHEL…YLIV).

Belongs to the ABC1 family. UbiB subfamily.

It is found in the cell inner membrane. It participates in cofactor biosynthesis; ubiquinone biosynthesis [regulation]. In terms of biological role, is probably a protein kinase regulator of UbiI activity which is involved in aerobic coenzyme Q (ubiquinone) biosynthesis. The chain is Probable protein kinase UbiB from Pseudomonas fluorescens (strain ATCC BAA-477 / NRRL B-23932 / Pf-5).